A 1653-amino-acid chain; its full sequence is Ciliary rootlet coiled-coil protein 2 (1653 aa).

Polar residues predominate over residues 1–17; sequence MSSASSEPGNGDASQQP. Residues 1–57 form a disordered region; the sequence is MSSASSEPGNGDASQQPLLGLDTVIQRLEDTILSPTASREDRALTVRGEGRQASPTP. A compositionally biased stretch (basic and acidic residues) spans 38 to 50; the sequence is SREDRALTVRGEG. Coiled coils occupy residues 86 to 145 and 310 to 351; these read VARV…SELE and KVAL…LVAQ. The interval 367–396 is disordered; it reads LGEPRRPLRSPQRATSPHQGASPPHICSPA. A coiled-coil region spans residues 423-1215; it reads LKSSQALVAS…QRKLAEVEAA (793 aa). Positions 1302–1356 are disordered; sequence GLQRQSPWASPEQPGSPTKGSDSSQALPGQQGTSPPARPHSPLRWPSPTPGGRSS. Residues 1304 to 1335 show a composition bias toward polar residues; that stretch reads QRQSPWASPEQPGSPTKGSDSSQALPGQQGTS. Residues 1361–1570 are a coiled coil; it reads VATVQDILRD…QAQMTEMEQA (210 aa).

The protein belongs to the rootletin family.

In Homo sapiens (Human), this protein is Ciliary rootlet coiled-coil protein 2.